The chain runs to 508 residues: Photosystem II CP47 reaction center protein (508 aa).

A run of 6 helical transmembrane segments spans residues 21-36 (SVHI…WAGS), 101-115 (IVFS…IWHW), 140-156 (GIHL…FGAF), 203-218 (IAAG…FHLS), 237-252 (VLSS…AFVV), and 457-472 (SFAL…HGSR).

This sequence belongs to the PsbB/PsbC family. PsbB subfamily. In terms of assembly, PSII is composed of 1 copy each of membrane proteins PsbA, PsbB, PsbC, PsbD, PsbE, PsbF, PsbH, PsbI, PsbJ, PsbK, PsbL, PsbM, PsbT, PsbX, PsbY, PsbZ, Psb30/Ycf12, at least 3 peripheral proteins of the oxygen-evolving complex and a large number of cofactors. It forms dimeric complexes. It depends on Binds multiple chlorophylls. PSII binds additional chlorophylls, carotenoids and specific lipids. as a cofactor.

Its subcellular location is the plastid. It is found in the chloroplast thylakoid membrane. One of the components of the core complex of photosystem II (PSII). It binds chlorophyll and helps catalyze the primary light-induced photochemical processes of PSII. PSII is a light-driven water:plastoquinone oxidoreductase, using light energy to abstract electrons from H(2)O, generating O(2) and a proton gradient subsequently used for ATP formation. The polypeptide is Photosystem II CP47 reaction center protein (Draba nemorosa (Woodland whitlowgrass)).